The chain runs to 219 residues: Transmembrane protein 179B (219 aa).

The next 4 membrane-spanning stretches (helical) occupy residues proline 6–alanine 26, isoleucine 69–phenylalanine 89, leucine 105–glycine 125, and alanine 167–isoleucine 187. Residues isoleucine 195 to proline 219 are disordered.

The protein belongs to the TMEM179 family.

It localises to the membrane. The protein is Transmembrane protein 179B (tmem179b) of Danio rerio (Zebrafish).